Here is a 427-residue protein sequence, read N- to C-terminus: Serine hydroxymethyltransferase (427 aa).

(6S)-5,6,7,8-tetrahydrofolate contacts are provided by residues leucine 122 and glycine 126–leucine 128. Lysine 231 carries the post-translational modification N6-(pyridoxal phosphate)lysine.

This sequence belongs to the SHMT family. Homodimer. The cofactor is pyridoxal 5'-phosphate.

The protein localises to the cytoplasm. The catalysed reaction is (6R)-5,10-methylene-5,6,7,8-tetrahydrofolate + glycine + H2O = (6S)-5,6,7,8-tetrahydrofolate + L-serine. The protein operates within one-carbon metabolism; tetrahydrofolate interconversion. It participates in amino-acid biosynthesis; glycine biosynthesis; glycine from L-serine: step 1/1. Functionally, catalyzes the reversible interconversion of serine and glycine with tetrahydrofolate (THF) serving as the one-carbon carrier. This reaction serves as the major source of one-carbon groups required for the biosynthesis of purines, thymidylate, methionine, and other important biomolecules. Also exhibits THF-independent aldolase activity toward beta-hydroxyamino acids, producing glycine and aldehydes, via a retro-aldol mechanism. This chain is Serine hydroxymethyltransferase, found in Acidobacterium capsulatum (strain ATCC 51196 / DSM 11244 / BCRC 80197 / JCM 7670 / NBRC 15755 / NCIMB 13165 / 161).